We begin with the raw amino-acid sequence, 397 residues long: 1-deoxy-D-xylulose 5-phosphate reductoisomerase (397 aa).

NADPH-binding residues include threonine 10, glycine 11, serine 12, isoleucine 13, glycine 36, asparagine 38, and asparagine 128. 1-deoxy-D-xylulose 5-phosphate is bound at residue lysine 129. Glutamate 130 is a binding site for NADPH. Aspartate 154 is a binding site for Mn(2+). 1-deoxy-D-xylulose 5-phosphate contacts are provided by serine 155, glutamate 156, serine 180, and histidine 203. Glutamate 156 is a Mn(2+) binding site. Glycine 209 provides a ligand contact to NADPH. Asparagine 221, lysine 222, and glutamate 225 together coordinate 1-deoxy-D-xylulose 5-phosphate. A Mn(2+)-binding site is contributed by glutamate 225.

Belongs to the DXR family. Requires Mg(2+) as cofactor. Mn(2+) is required as a cofactor.

It carries out the reaction 2-C-methyl-D-erythritol 4-phosphate + NADP(+) = 1-deoxy-D-xylulose 5-phosphate + NADPH + H(+). Its pathway is isoprenoid biosynthesis; isopentenyl diphosphate biosynthesis via DXP pathway; isopentenyl diphosphate from 1-deoxy-D-xylulose 5-phosphate: step 1/6. Functionally, catalyzes the NADPH-dependent rearrangement and reduction of 1-deoxy-D-xylulose-5-phosphate (DXP) to 2-C-methyl-D-erythritol 4-phosphate (MEP). This is 1-deoxy-D-xylulose 5-phosphate reductoisomerase from Solibacter usitatus (strain Ellin6076).